We begin with the raw amino-acid sequence, 341 residues long: tRNA-specific 2-thiouridylase MnmA (341 aa).

ATP is bound by residues 8 to 15 and M34; that span reads GMSGGVDS. Catalysis depends on C94, which acts as the Nucleophile. C94 and C188 are joined by a disulfide. Position 118 (G118) interacts with ATP. Positions 136–138 are interaction with tRNA; it reads KDQ. The active-site Cysteine persulfide intermediate is the C188. The interaction with tRNA stretch occupies residues 290 to 291; the sequence is RY.

Belongs to the MnmA/TRMU family.

It is found in the cytoplasm. The enzyme catalyses S-sulfanyl-L-cysteinyl-[protein] + uridine(34) in tRNA + AH2 + ATP = 2-thiouridine(34) in tRNA + L-cysteinyl-[protein] + A + AMP + diphosphate + H(+). Catalyzes the 2-thiolation of uridine at the wobble position (U34) of tRNA, leading to the formation of s(2)U34. This chain is tRNA-specific 2-thiouridylase MnmA, found in Sulfurimonas denitrificans (strain ATCC 33889 / DSM 1251) (Thiomicrospira denitrificans (strain ATCC 33889 / DSM 1251)).